The chain runs to 545 residues: Probable acyl-activating enzyme 4 (545 aa).

Belongs to the ATP-dependent AMP-binding enzyme family. In terms of tissue distribution, expressed in roots, leaves, stems, flowers and developing seeds.

Functionally, may act as an acid--thiol ligase that activates carboxylic acids by forming acyl-CoAs. The protein is Probable acyl-activating enzyme 4 (AEE4) of Arabidopsis thaliana (Mouse-ear cress).